Here is a 319-residue protein sequence, read N- to C-terminus: Ribonuclease Z (319 aa).

Positions 62, 64, 66, 67, 145, 215, and 273 each coordinate Zn(2+). Asp-66 acts as the Proton acceptor in catalysis.

The protein belongs to the RNase Z family. As to quaternary structure, homodimer. Zn(2+) is required as a cofactor.

The catalysed reaction is Endonucleolytic cleavage of RNA, removing extra 3' nucleotides from tRNA precursor, generating 3' termini of tRNAs. A 3'-hydroxy group is left at the tRNA terminus and a 5'-phosphoryl group is left at the trailer molecule.. Its function is as follows. Zinc phosphodiesterase, which displays some tRNA 3'-processing endonuclease activity. Probably involved in tRNA maturation, by removing a 3'-trailer from precursor tRNA. This is Ribonuclease Z from Borreliella afzelii (strain PKo) (Borrelia afzelii).